Reading from the N-terminus, the 80-residue chain is Inner kinetochore subunit MHF2 (80 aa).

The protein belongs to the CENP-X/MHF2 family. The MHF histone-fold complex is a heterotetramer of 2 MHF1-MHF2 heterodimers. Together with MPH1/FANCM, forms the FANCM-MHF complex. Component of the inner kinetochore constitutive centromere-associated network (CCAN) (also known as central kinetochore CTF19 complex in yeast), which is composed of at least AME1, CHL4, CNN1, CTF3, CTF19, IML3, MCM16, MCM21, MCM22, MHF1, MHF2, MIF2, NKP1, NKP2, OKP1 and WIP1.

In terms of biological role, DNA-binding component of a FANCM-MHF complex involved in DNA damage repair and genome maintenance. FANCM-MHF promotes gene conversion at blocked replication forks, probably by reversal of the stalled fork. Component of the kinetochore, a multiprotein complex that assembles on centromeric DNA and attaches chromosomes to spindle microtubules, mediating chromosome segregation and sister chromatid segregation during meiosis and mitosis. Component of the inner kinetochore constitutive centromere-associated network (CCAN), which serves as a structural platform for outer kinetochore assembly. The chain is Inner kinetochore subunit MHF2 from Saccharomyces cerevisiae (strain ATCC 204508 / S288c) (Baker's yeast).